Here is a 380-residue protein sequence, read N- to C-terminus: Probable tRNA sulfurtransferase (380 aa).

Residues 58–162 (EEVIERLKKV…MAFVYAGVIE (105 aa)) form the THUMP domain. Residues 178 to 179 (LL), 203 to 204 (YF), arginine 260, glycine 282, and glutamine 291 contribute to the ATP site.

Belongs to the ThiI family.

Its subcellular location is the cytoplasm. The catalysed reaction is [ThiI sulfur-carrier protein]-S-sulfanyl-L-cysteine + a uridine in tRNA + 2 reduced [2Fe-2S]-[ferredoxin] + ATP + H(+) = [ThiI sulfur-carrier protein]-L-cysteine + a 4-thiouridine in tRNA + 2 oxidized [2Fe-2S]-[ferredoxin] + AMP + diphosphate. It catalyses the reaction [ThiS sulfur-carrier protein]-C-terminal Gly-Gly-AMP + S-sulfanyl-L-cysteinyl-[cysteine desulfurase] + AH2 = [ThiS sulfur-carrier protein]-C-terminal-Gly-aminoethanethioate + L-cysteinyl-[cysteine desulfurase] + A + AMP + 2 H(+). It participates in cofactor biosynthesis; thiamine diphosphate biosynthesis. Functionally, catalyzes the ATP-dependent transfer of a sulfur to tRNA to produce 4-thiouridine in position 8 of tRNAs, which functions as a near-UV photosensor. Also catalyzes the transfer of sulfur to the sulfur carrier protein ThiS, forming ThiS-thiocarboxylate. This is a step in the synthesis of thiazole, in the thiamine biosynthesis pathway. The sulfur is donated as persulfide by IscS. In Thermoanaerobacter pseudethanolicus (strain ATCC 33223 / 39E) (Clostridium thermohydrosulfuricum), this protein is Probable tRNA sulfurtransferase.